Here is a 246-residue protein sequence, read N- to C-terminus: MKNQDVAIIIPSRLNSTRLIQKPLQLIGSITLIERVFQQVNKANIHHTYVATDSEEIANVIKKISGKVIFTDSNIPTGTDRAYEAFKLIPNNHNIHYIINVQGDIPFIEHRSILKIIEYLKNSEYDIVTPVVKVDRESIEDSSNVTVAVDYTGKALYFSRSPIPHGAEEFLYHLGIYGFRKNALEKFVSLKQTFLEKTERLEQLRILENGMTIGTCLVENVPISVDTEEDLKKAIKFCKKINKLGL.

The protein belongs to the KdsB family.

Its subcellular location is the cytoplasm. The catalysed reaction is 3-deoxy-alpha-D-manno-oct-2-ulosonate + CTP = CMP-3-deoxy-beta-D-manno-octulosonate + diphosphate. Its pathway is nucleotide-sugar biosynthesis; CMP-3-deoxy-D-manno-octulosonate biosynthesis; CMP-3-deoxy-D-manno-octulosonate from 3-deoxy-D-manno-octulosonate and CTP: step 1/1. It functions in the pathway bacterial outer membrane biogenesis; lipopolysaccharide biosynthesis. Its function is as follows. Activates KDO (a required 8-carbon sugar) for incorporation into bacterial lipopolysaccharide in Gram-negative bacteria. This is 3-deoxy-manno-octulosonate cytidylyltransferase from Rickettsia prowazekii (strain Madrid E).